Consider the following 501-residue polypeptide: Sensor histidine kinase PdtaS (501 aa).

Positions 4 to 150 (LGDLLAEHTV…HLETAYRLCA (147 aa)) are GAF. Positions 179 to 291 (DGFIRLDVDG…TEVKRRDRAL (113 aa)) are PAS-like. One can recognise a Histidine kinase domain in the interval 300 to 495 (EIHHRVKNNL…DVVLRVPVGR (196 aa)). Histidine 303 carries the post-translational modification Phosphohistidine; by autocatalysis.

In terms of processing, autophosphorylated.

Its subcellular location is the cytoplasm. It carries out the reaction ATP + protein L-histidine = ADP + protein N-phospho-L-histidine.. Its function is as follows. Member of the two-component regulatory system PdtaR/PdtaS. This two-component system plays an essential role in mycobacterial adaptation to poor nutrient conditions. Nutrient deprivation results in increasing intracellular concentrations of cyclic diguanosine monophosphate (c-di-GMP), which binds to the PdtaS sensor and promotes its autophosphorylation, leading to the activation of the signaling cascade. The phosphate group is then transferred to PdtaR. In terms of biological role, in addition, the PdtaR/PdtaS two-component system controls copper and nitric oxide (NO) resistance downstream of the intramembrane protease Rip1. This coupled Rip1/PdtaS/PdtaR circuit controls NO resistance and acute lung infection in mice by relieving PdtaR/PdtaS-mediated repression of isonitrile chalkophore biosynthesis. Two signals are required to fully inactivate the PdtaR/PdtaS system and mediate NO resistance: a cytoplasmic inhibitory signal through the PdtaS kinase mediated by direct sensing of NO and the production of PPE1-5', an NO-induced small RNA, to sequester PdtaR. This chain is Sensor histidine kinase PdtaS (pdtaS), found in Mycobacterium tuberculosis (strain CDC 1551 / Oshkosh).